Consider the following 502-residue polypeptide: 2-isopropylmalate synthase (502 aa).

Mn(2+)-binding residues include D1, H189, H191, and N225. A Pyruvate carboxyltransferase domain is found at 1-254; it reads DGEQALQASL…STNINHKEIY (254 aa). The tract at residues 379–502 is regulatory domain; the sequence is CLKFFSVQSI…VNKNLKNLKK (124 aa).

Belongs to the alpha-IPM synthase/homocitrate synthase family. LeuA type 1 subfamily. In terms of assembly, homodimer. The cofactor is Mn(2+).

The protein localises to the cytoplasm. The catalysed reaction is 3-methyl-2-oxobutanoate + acetyl-CoA + H2O = (2S)-2-isopropylmalate + CoA + H(+). It functions in the pathway amino-acid biosynthesis; L-leucine biosynthesis; L-leucine from 3-methyl-2-oxobutanoate: step 1/4. Functionally, catalyzes the condensation of the acetyl group of acetyl-CoA with 3-methyl-2-oxobutanoate (2-ketoisovalerate) to form 3-carboxy-3-hydroxy-4-methylpentanoate (2-isopropylmalate). The chain is 2-isopropylmalate synthase from Buchnera aphidicola subsp. Uroleucon sonchi.